The chain runs to 117 residues: Large ribosomal subunit protein bL20 (117 aa).

The protein belongs to the bacterial ribosomal protein bL20 family.

In terms of biological role, binds directly to 23S ribosomal RNA and is necessary for the in vitro assembly process of the 50S ribosomal subunit. It is not involved in the protein synthesizing functions of that subunit. The chain is Large ribosomal subunit protein bL20 from Lawsonia intracellularis (strain PHE/MN1-00).